The sequence spans 167 residues: I-Kappa-B like protein F2 (167 aa).

3 ANK repeats span residues H54–G86, F91–I121, and L125–V154.

Belongs to the polydnaviridae I-Kappa-B-like protein family.

Suppresses the host immune response through NF-kappa-B inactivation. Possesses ankyrin repeat domains required for NF-kappa-B binding but lacks the regulatory regions required for dissociation from NF-kappa-B and degradation. Therefore, prevents host NF-kappa-B release and subsequent activation. This Microplitis demolitor bracovirus (isolate Webb) (MdBV) protein is I-Kappa-B like protein F2 (F3).